Reading from the N-terminus, the 290-residue chain is Phosphoribosylaminoimidazole-succinocarboxamide synthase (290 aa).

This sequence belongs to the SAICAR synthetase family.

The catalysed reaction is 5-amino-1-(5-phospho-D-ribosyl)imidazole-4-carboxylate + L-aspartate + ATP = (2S)-2-[5-amino-1-(5-phospho-beta-D-ribosyl)imidazole-4-carboxamido]succinate + ADP + phosphate + 2 H(+). The protein operates within purine metabolism; IMP biosynthesis via de novo pathway; 5-amino-1-(5-phospho-D-ribosyl)imidazole-4-carboxamide from 5-amino-1-(5-phospho-D-ribosyl)imidazole-4-carboxylate: step 1/2. This is Phosphoribosylaminoimidazole-succinocarboxamide synthase from Haemophilus influenzae (strain PittGG).